Here is a 375-residue protein sequence, read N- to C-terminus: Phosphate acyltransferase (375 aa).

The tract at residues 354–375 is disordered; sequence AQDDATSADADAPGDSETGSTN. Low complexity predominate over residues 356-368; the sequence is DDATSADADAPGD.

The protein belongs to the PlsX family. In terms of assembly, homodimer. Probably interacts with PlsY.

Its subcellular location is the cytoplasm. The catalysed reaction is a fatty acyl-[ACP] + phosphate = an acyl phosphate + holo-[ACP]. The protein operates within lipid metabolism; phospholipid metabolism. Catalyzes the reversible formation of acyl-phosphate (acyl-PO(4)) from acyl-[acyl-carrier-protein] (acyl-ACP). This enzyme utilizes acyl-ACP as fatty acyl donor, but not acyl-CoA. In Ruegeria sp. (strain TM1040) (Silicibacter sp.), this protein is Phosphate acyltransferase.